A 103-amino-acid chain; its full sequence is Histone H4 (103 aa).

The segment covering 1-14 (MTGRGKGGKGLGKG) has biased composition (gly residues). The segment at 1–20 (MTGRGKGGKGLGKGGAKRHR) is disordered. N6-acetyl-N6-methyllysine; alternate is present on residues lysine 6 and lysine 13. Residues 17–21 (KRHRK) mediate DNA binding.

The protein belongs to the histone H4 family. As to quaternary structure, the nucleosome is a histone octamer containing two molecules each of H2A, H2B, H3 and H4 assembled in one H3-H4 heterotetramer and two H2A-H2B heterodimers. The octamer wraps approximately 147 bp of DNA.

The protein resides in the nucleus. It localises to the chromosome. Functionally, core component of nucleosome. Nucleosomes wrap and compact DNA into chromatin, limiting DNA accessibility to the cellular machineries which require DNA as a template. Histones thereby play a central role in transcription regulation, DNA repair, DNA replication and chromosomal stability. DNA accessibility is regulated via a complex set of post-translational modifications of histones, also called histone code, and nucleosome remodeling. This is Histone H4 from Diadromus pulchellus (Parasitic wasp).